A 328-amino-acid chain; its full sequence is Malate dehydrogenase (328 aa).

11 to 17 is a binding site for NAD(+); it reads GAAGQIG. Substrate contacts are provided by R94 and R100. Residues N107, Q114, and 131-133 each bind NAD(+); that span reads VGN. 2 residues coordinate substrate: N133 and R164. The Proton acceptor role is filled by H189.

The protein belongs to the LDH/MDH superfamily. MDH type 2 family.

It catalyses the reaction (S)-malate + NAD(+) = oxaloacetate + NADH + H(+). Catalyzes the reversible oxidation of malate to oxaloacetate. This chain is Malate dehydrogenase, found in Acinetobacter baumannii (strain AB0057).